Consider the following 341-residue polypeptide: D-aspartate oxidase (341 aa).

The FAD site is built by Asp-36, Arg-37, Thr-43, Ser-44, Met-50, Gly-307, Ile-311, and Ser-312. The Microbody targeting signal signature appears at 339–341; sequence SKL.

Belongs to the DAMOX/DASOX family. As to quaternary structure, tetramer. Interacts with PEX5; the interaction is direct and required for localization of DDO to the peroxisome. It depends on FAD as a cofactor. As to expression, expressed in liver and kidney (at protein level). In the brain, expressed in the frontal, temporal, and occipital lobes of the cortex, hippocampus, striatum, diencephalon, brainstem, cerebellum, spinal cord, plexus choroiderus and ependyma (at protein level). Also expressed in the lung, muscle, heart, spleen, small intestine and testis (at protein level).

The protein localises to the peroxisome matrix. Its subcellular location is the cytoplasm. It is found in the cytosol. It catalyses the reaction D-aspartate + O2 + H2O = oxaloacetate + H2O2 + NH4(+). The catalysed reaction is D-glutamate + O2 + H2O = H2O2 + 2-oxoglutarate + NH4(+). With respect to regulation, inhibited by aminooxyacetic acid, malonate, meso-tartrate and potassium bromide. Selectively catalyzes the oxidative deamination of acidic amino acids. Suppresses the level of D-aspartate in the brain, an amino acid that can act as an agonist for glutamate receptors. Protects the organism from the toxicity of D-amino acids. May also function in the intestine. In Rattus norvegicus (Rat), this protein is D-aspartate oxidase.